The sequence spans 223 residues: Ribose-5-phosphate isomerase A (223 aa).

Substrate-binding positions include 32–35 (TGST), 85–88 (DGAD), and 98–101 (KGGG). E107 serves as the catalytic Proton acceptor. Residue K125 coordinates substrate.

Belongs to the ribose 5-phosphate isomerase family. As to quaternary structure, homodimer.

The catalysed reaction is aldehydo-D-ribose 5-phosphate = D-ribulose 5-phosphate. It participates in carbohydrate degradation; pentose phosphate pathway; D-ribose 5-phosphate from D-ribulose 5-phosphate (non-oxidative stage): step 1/1. In terms of biological role, catalyzes the reversible conversion of ribose-5-phosphate to ribulose 5-phosphate. The sequence is that of Ribose-5-phosphate isomerase A from Pseudomonas aeruginosa (strain LESB58).